Here is an 86-residue protein sequence, read N- to C-terminus: MAEKRKYSRKYCKYTEAKIDFIDYKDTSLLKYCLSERFKIMPRRLTGTSKKYQEMVEKAIKRARHAAIIPYIVDRKDVVTNPFEGI.

It belongs to the bacterial ribosomal protein bS18 family. As to quaternary structure, part of the 30S ribosomal subunit. Forms a tight heterodimer with protein bS6.

Binds as a heterodimer with protein bS6 to the central domain of the 16S rRNA, where it helps stabilize the platform of the 30S subunit. In Campylobacter curvus (strain 525.92), this protein is Small ribosomal subunit protein bS18.